Consider the following 393-residue polypeptide: Protein Njmu-R1 (393 aa).

The interval 1 to 74 is disordered; it reads MLPSLQESLD…AETPSGDDFS (74 aa). Phosphoserine is present on residues Ser-8 and Ser-18. A compositionally biased stretch (acidic residues) spans 9-24; that stretch reads LDGDEKELESSEEGGS.

As to quaternary structure, interacts with TBC1D23; this interaction may be indirect.

Functionally, may have a role in spermatogenesis. This Mus musculus (Mouse) protein is Protein Njmu-R1.